The following is a 277-amino-acid chain: Putative hydro-lyase BPP3031 (277 aa).

Belongs to the D-glutamate cyclase family.

The polypeptide is Putative hydro-lyase BPP3031 (Bordetella parapertussis (strain 12822 / ATCC BAA-587 / NCTC 13253)).